Consider the following 171-residue polypeptide: Co-chaperone protein HscB homolog (171 aa).

The J domain maps to 2–74; sequence NHFELFGLPS…ISRAEYILAE (73 aa).

It belongs to the HscB family. In terms of assembly, interacts with HscA and stimulates its ATPase activity.

Functionally, co-chaperone involved in the maturation of iron-sulfur cluster-containing proteins. Seems to help targeting proteins to be folded toward HscA. The sequence is that of Co-chaperone protein HscB homolog from Vibrio parahaemolyticus serotype O3:K6 (strain RIMD 2210633).